The chain runs to 765 residues: Proton-coupled zinc antiporter SLC30A5 (765 aa).

Residue methionine 1 is modified to N-acetylmethionine. Topologically, residues methionine 1 to tyrosine 32 are cytoplasmic. A helical transmembrane segment spans residues isoleucine 33 to leucine 53. The Lumenal segment spans residues leucine 54–alanine 56. A helical membrane pass occupies residues valine 57–phenylalanine 77. Residues glutamine 78 to histidine 98 are Cytoplasmic-facing. The chain crosses the membrane as a helical span at residues alanine 99–leucine 119. Position 120 (arginine 120) is a topological domain, lumenal. A helical membrane pass occupies residues threonine 121–threonine 141. Residues serine 142–glycine 152 lie on the Cytoplasmic side of the membrane. Residues alanine 153–alanine 173 traverse the membrane as a helical segment. Residues lysine 174–threonine 193 are Lumenal-facing. Residues alanine 194–leucine 214 form a helical membrane-spanning segment. Residues cysteine 215–glutamine 238 lie on the Cytoplasmic side of the membrane. The helical transmembrane segment at alanine 239–threonine 259 threads the bilayer. Over threonine 260 to tryptophan 267 the chain is Lumenal. The helical transmembrane segment at phenylalanine 268–valine 288 threads the bilayer. At aspartate 289–arginine 303 the chain is on the cytoplasmic side. The helical transmembrane segment at tyrosine 304 to isoleucine 324 threads the bilayer. The Lumenal portion of the chain corresponds to threonine 325–histidine 342. Residues valine 343–serine 363 form a helical membrane-spanning segment. At serine 364–glutamine 418 the chain is on the cytoplasmic side. Residues isoleucine 419–leucine 439 traverse the membrane as a helical segment. The segment at phenylalanine 420 to leucine 640 is mediates homodimerization with SLC30A6. The Lumenal portion of the chain corresponds to threonine 440–aspartate 448. The chain crosses the membrane as a helical span at residues glycine 449–serine 469. Residues histidine 451 and aspartate 455 each contribute to the Zn(2+) site. The Cytoplasmic segment spans residues arginine 470–arginine 483. A helical transmembrane segment spans residues isoleucine 484–phenylalanine 504. The Lumenal portion of the chain corresponds to methionine 505–histidine 520. A helical membrane pass occupies residues methionine 521 to serine 541. Positions histidine 542–histidine 578 are his-rich loop; required for zinc transport. Residues histidine 542–valine 592 lie on the Cytoplasmic side of the membrane. A disordered region spans residues serine 551–alanine 581. Residues phenylalanine 593–isoleucine 613 form a helical membrane-spanning segment. Histidine 595 and aspartate 599 together coordinate Zn(2+). Residues glutamate 614–glycine 617 lie on the Lumenal side of the membrane. A helical transmembrane segment spans residues tryptophan 618–valine 638. The Cytoplasmic portion of the chain corresponds to proline 639 to methionine 765.

The protein belongs to the cation diffusion facilitator (CDF) transporter (TC 2.A.4) family. SLC30A subfamily. As to quaternary structure, heterodimer with SLC30A6/ZNT6; form a functional zinc ion transmembrane transporter. Post-translationally, could homodimerize through the formation of dityrosine bonds upon oxidative stress. As to expression, ubiquitously expressed. Highly expressed in pancreas, liver and kidney. Expressed abundantly in insulin-containing beta cells, undetectable in other endocrine cell types including glucagon-secreting alpha cells and most acinar cells (at protein level).

It localises to the golgi apparatus. It is found in the golgi stack membrane. Its subcellular location is the cytoplasmic vesicle. The protein resides in the COPII-coated vesicle membrane. The protein localises to the secretory vesicle membrane. It localises to the trans-Golgi network membrane. It is found in the endoplasmic reticulum membrane. Its subcellular location is the cell membrane. The protein resides in the apical cell membrane. It catalyses the reaction Zn(2+)(in) + 2 H(+)(out) = Zn(2+)(out) + 2 H(+)(in). Its function is as follows. Together with SLC30A6 forms a functional proton-coupled zinc ion antiporter mediating zinc entry into the lumen of organelles along the secretory pathway. By contributing to zinc ion homeostasis within the early secretory pathway, regulates the activation and folding of enzymes like alkaline phosphatases and enzymes involved in phosphatidylinositol glycan anchor biosynthesis. Through the transport of zinc into secretory granules of pancreatic beta-cells, plays an important role in the storage and secretion of insulin. Zinc ion:proton antiporter mediating influx and efflux of zinc at the plasma membrane. The sequence is that of Proton-coupled zinc antiporter SLC30A5 from Homo sapiens (Human).